Reading from the N-terminus, the 27-residue chain is Conotoxin as14a (27 aa).

2 cysteine pairs are disulfide-bonded: C6/C26 and C10/C22.

Belongs to the conotoxin L superfamily. Expressed by the venom duct.

Its subcellular location is the secreted. Functionally, in vivo, intracranial injection, elicits scratching and grooming activity in mice. In Conus cancellatus (Cancellate cone), this protein is Conotoxin as14a.